The sequence spans 458 residues: Argininosuccinate lyase (458 aa).

The protein belongs to the lyase 1 family. Argininosuccinate lyase subfamily.

Its subcellular location is the cytoplasm. The enzyme catalyses 2-(N(omega)-L-arginino)succinate = fumarate + L-arginine. The protein operates within amino-acid biosynthesis; L-arginine biosynthesis; L-arginine from L-ornithine and carbamoyl phosphate: step 3/3. The sequence is that of Argininosuccinate lyase from Salmonella paratyphi A (strain ATCC 9150 / SARB42).